Consider the following 185-residue polypeptide: Prenylated Rab acceptor protein 1 (185 aa).

The Cytoplasmic portion of the chain corresponds to 1-78 (MAAQKDQQKD…RNVEYYQSNY (78 aa)). Residues 30–54 (AGREWLERRRATIRPWGSFVDQRRF) are required for interaction with prenylated RAB3A and VAMP2. A run of 2 helical transmembrane segments spans residues 79-94 (VFVF…VTSP) and 95-112 (MLLV…ILYL). The Cytoplasmic portion of the chain corresponds to 113 to 131 (RTLQSKFVLFGREVSPAHQ). The next 2 membrane-spanning stretches (helical) occupy residues 132–148 (YALA…LAGA) and 149–165 (GSAV…VIGS). Residues 165–185 (SHAAFHQIEAVDGEELQMEPV) are required for interaction with GDI1. Over 166–185 (HAAFHQIEAVDGEELQMEPV) the chain is Cytoplasmic. A required for interaction with prenylated RAB3A and VAMP2 region spans residues 175-185 (VDGEELQMEPV). The segment at 175-185 (VDGEELQMEPV) is homodimerization.

The protein belongs to the PRA1 family. As to quaternary structure, homodimer. Interacts with VAMP2 (synaptobrevin-2), prenylated Rab proteins, GDI1, NRDG1 and PCLO.

The protein localises to the cell membrane. Its subcellular location is the cytoplasm. The protein resides in the golgi apparatus. It localises to the cytoplasmic vesicle. It is found in the secretory vesicle. The protein localises to the synaptic vesicle. Its function is as follows. General Rab protein regulator required for vesicle formation from the Golgi complex. May control vesicle docking and fusion by mediating the action of Rab GTPases to the SNARE complexes. In addition it inhibits the removal of Rab GTPases from the membrane by GDI1. This chain is Prenylated Rab acceptor protein 1 (RABAC1), found in Sus scrofa (Pig).